Consider the following 178-residue polypeptide: ATP-dependent protease subunit HslV (178 aa).

Thr-7 is a catalytic residue. Na(+) contacts are provided by Gly-162, Cys-165, and Thr-168.

Belongs to the peptidase T1B family. HslV subfamily. A double ring-shaped homohexamer of HslV is capped on each side by a ring-shaped HslU homohexamer. The assembly of the HslU/HslV complex is dependent on binding of ATP.

It localises to the cytoplasm. The enzyme catalyses ATP-dependent cleavage of peptide bonds with broad specificity.. Its activity is regulated as follows. Allosterically activated by HslU binding. In terms of biological role, protease subunit of a proteasome-like degradation complex believed to be a general protein degrading machinery. This chain is ATP-dependent protease subunit HslV, found in Ralstonia nicotianae (strain ATCC BAA-1114 / GMI1000) (Ralstonia solanacearum).